Reading from the N-terminus, the 364-residue chain is MSTDGNNNKKGSKEGPKSSEISKFDLAKENPKLAEWMDDCIKRMNSLYKDTNINICNVMTGHEIISIIRMVEAIFMEESNLCEAEAPIKVIGDIHAQYQDMNRLFDLIGRVPEEKLMFLGDYVDRGPQGIEVLILLFCLKIRYRDRIYLLRGNHETPSVNKIYGFYVECQYKYGIGLWWDFQSCFNRMPMSGLISKRVLCMHGGLSPELINLDTIRNIPRPCEPLDRGLLIDLLWSDPTNKGEGWFHSIRGISYMFGKGVVEQACKSLEIDLIIRAHQVVQDGYEMMTGRRLITVFSVPNYCAQFTNAAAVVCLNANLQISFQQMIPPPLPEGTKAKAAPAIAIDPNIDAARADKDAIKPFVKE.

A disordered region spans residues 1–24; sequence MSTDGNNNKKGSKEGPKSSEISKF. Residues 11 to 24 are compositionally biased toward basic and acidic residues; the sequence is GSKEGPKSSEISKF. Residues aspartate 93, histidine 95, aspartate 121, and asparagine 153 each coordinate Mn(2+). Histidine 154 (proton donor) is an active-site residue. Histidine 202 and histidine 277 together coordinate Mn(2+).

The protein belongs to the PPP phosphatase family. PP-1 subfamily. Mn(2+) serves as cofactor.

It catalyses the reaction O-phospho-L-seryl-[protein] + H2O = L-seryl-[protein] + phosphate. It carries out the reaction O-phospho-L-threonyl-[protein] + H2O = L-threonyl-[protein] + phosphate. The chain is Putative serine/threonine-protein phosphatase C06A1.3 from Caenorhabditis elegans.